Reading from the N-terminus, the 86-residue chain is Beta-toxin To4 (86 aa).

The N-terminal stretch at 1–20 (MTRFVLFISCFFLIGMIVEC) is a signal peptide. The region spanning 21-83 (KDGYLMEYGG…IWNRATNKCG (63 aa)) is the LCN-type CS-alpha/beta domain. Disulfide bonds link C31–C82, C35–C57, C43–C63, and C47–C65. C82 carries the post-translational modification Cysteine amide.

It belongs to the long (4 C-C) scorpion toxin superfamily. Sodium channel inhibitor family. Beta subfamily. As to expression, expressed by the venom gland.

It localises to the secreted. In terms of biological role, beta toxins bind voltage-independently at site-4 of sodium channels (Nav) and shift the voltage of activation toward more negative potentials thereby affecting sodium channel activation and promoting spontaneous and repetitive firing. This toxin shows moderate inhibition of Nav1.1/SCN1A, Nav1.2/SCN2A, and Nav1.4/SCN4A, and promotes a left voltage shift on these channels. It exhibits similar potency on Nav1.2/SCN2A and Nav1.4/SCN4A (40-50% peak current inhibition at 0.5 uM), and weaker inhibition on Nav1.2 (20-30% peak current inhibition at 0.5 uM). The polypeptide is Beta-toxin To4 (Tityus obscurus (Amazonian scorpion)).